The sequence spans 594 residues: UvrABC system protein C (594 aa).

The GIY-YIG domain occupies 13–99 (SSSGVYQYFD…IKQLKPKYNI (87 aa)). The UVR domain maps to 205–240 (DRLIKELELKMERLSSNLRFEEALIYRDRIAKIQKI).

The protein belongs to the UvrC family. As to quaternary structure, interacts with UvrB in an incision complex.

The protein resides in the cytoplasm. In terms of biological role, the UvrABC repair system catalyzes the recognition and processing of DNA lesions. UvrC both incises the 5' and 3' sides of the lesion. The N-terminal half is responsible for the 3' incision and the C-terminal half is responsible for the 5' incision. In Helicobacter pylori (strain J99 / ATCC 700824) (Campylobacter pylori J99), this protein is UvrABC system protein C.